A 341-amino-acid chain; its full sequence is Glyceraldehyde-3-phosphate dehydrogenase 3 (341 aa).

Residues 13-14 (RI), D35, and R85 contribute to the NAD(+) site. D-glyceraldehyde 3-phosphate is bound by residues 157 to 159 (SCT), T188, 217 to 218 (TG), and R240. The active-site Nucleophile is C158. N322 provides a ligand contact to NAD(+).

The protein belongs to the glyceraldehyde-3-phosphate dehydrogenase family. Homotetramer.

It localises to the cytoplasm. The catalysed reaction is D-glyceraldehyde 3-phosphate + phosphate + NAD(+) = (2R)-3-phospho-glyceroyl phosphate + NADH + H(+). It participates in carbohydrate degradation; glycolysis; pyruvate from D-glyceraldehyde 3-phosphate: step 1/5. The polypeptide is Glyceraldehyde-3-phosphate dehydrogenase 3 (gpd-3) (Caenorhabditis elegans).